The chain runs to 276 residues: Large ribosomal subunit protein uL2 (276 aa).

A disordered region spans residues 211-276; it reads RNRHRGIRPQ…KLIISRRKGK (66 aa). A compositionally biased stretch (basic and acidic residues) spans 230-240; the sequence is DHPHGGGEGKK.

This sequence belongs to the universal ribosomal protein uL2 family. As to quaternary structure, part of the 50S ribosomal subunit. Forms a bridge to the 30S subunit in the 70S ribosome.

Its function is as follows. One of the primary rRNA binding proteins. Required for association of the 30S and 50S subunits to form the 70S ribosome, for tRNA binding and peptide bond formation. It has been suggested to have peptidyltransferase activity; this is somewhat controversial. Makes several contacts with the 16S rRNA in the 70S ribosome. The sequence is that of Large ribosomal subunit protein uL2 from Campylobacter jejuni subsp. doylei (strain ATCC BAA-1458 / RM4099 / 269.97).